A 545-amino-acid polypeptide reads, in one-letter code: Chaperonin GroEL 2 (545 aa).

ATP is bound by residues 29-32 (TLGP), 86-90 (DGTTT), Gly-413, 479-481 (NAA), and Asp-495.

It belongs to the chaperonin (HSP60) family. As to quaternary structure, forms a cylinder of 14 subunits composed of two heptameric rings stacked back-to-back. Interacts with the co-chaperonin GroES.

It is found in the cytoplasm. The enzyme catalyses ATP + H2O + a folded polypeptide = ADP + phosphate + an unfolded polypeptide.. Together with its co-chaperonin GroES, plays an essential role in assisting protein folding. The GroEL-GroES system forms a nano-cage that allows encapsulation of the non-native substrate proteins and provides a physical environment optimized to promote and accelerate protein folding. The sequence is that of Chaperonin GroEL 2 from Prochlorococcus marinus (strain MIT 9301).